A 394-amino-acid chain; its full sequence is Saposin-like protein 11 (394 aa).

A signal peptide spans 1 to 18; sequence MSVFRFLLFLSLLVGSNA. Residues N25 and N272 are each glycosylated (N-linked (GlcNAc...) asparagine). The Saposin B-type domain maps to 306–394; sequence GNMVCDICEK…SFCKHVPFCK (89 aa). 3 disulfides stabilise this stretch: C310/C393, C313/C387, and C343/C359.

The protein is Saposin-like protein 11 (spp-11) of Caenorhabditis elegans.